Consider the following 427-residue polypeptide: MTKVEKNGIGKRICVIGLGYIGLPTASMLAIQGFDVIGVDINEKRVKEIKELSFKTTEKDLMTLVKGAINSGNLKVQTKPEKADVFIICVPTPCIECDGEKKCDLTYLNKAIESIKPYLENGNLIIIESTIPPGTTDDIYKKLSKDKKIYVAHCPERVLPGSILKELVENDRVIGGVDEKSAEMAKEIYETFVTGKIYLTDAKTAEMVKLMENTYRDVNIALANEFAKIAEEIGINVWEAIELANKHPRVNILKPGPGVGGHCISIDPWFIVEKSKNAKLIRTARELNDSMPLFVVEKIKKIIKKDIGKVAIFGVTYKGNVDDTRESPAEKVVSKLIDEGFEVKCYDKYARDFIYPLNSLDEAVEGADIIVILAEHDEYKNFDKEDIKNIASKVKNKIILDTKNILNRELWEKEGFKVYVLGDGKNA.

Residues tyrosine 20, isoleucine 21, aspartate 40, arginine 45, threonine 92, and threonine 130 each contribute to the NAD(+) site. UDP-N-acetyl-alpha-D-mannosaminouronate-binding residues include arginine 157, valine 158, lysine 209, asparagine 213, arginine 216, histidine 247, arginine 249, and glycine 260. Lysine 209 functions as the Proton donor/acceptor in the catalytic mechanism. Cysteine 263 functions as the Nucleophile in the catalytic mechanism. Residues tyrosine 317 and lysine 318 each coordinate UDP-N-acetyl-alpha-D-mannosaminouronate. NAD(+) is bound at residue arginine 325. Position 403 (lysine 403) interacts with UDP-N-acetyl-alpha-D-mannosaminouronate.

The protein belongs to the UDP-glucose/GDP-mannose dehydrogenase family. Homotetramer; probably dimer of dimers.

The catalysed reaction is UDP-N-acetyl-alpha-D-mannosamine + 2 NAD(+) + H2O = UDP-N-acetyl-alpha-D-mannosaminouronate + 2 NADH + 3 H(+). Functionally, catalyzes the four-electron oxidation of UDP-N-acetyl-D-mannosamine (UDP-ManNAc), reducing NAD(+) and releasing UDP-N-acetylmannosaminuronic acid (UDP-ManNAcA). This Methanocaldococcus jannaschii (strain ATCC 43067 / DSM 2661 / JAL-1 / JCM 10045 / NBRC 100440) (Methanococcus jannaschii) protein is UDP-N-acetyl-D-mannosamine dehydrogenase (wecC).